A 206-amino-acid chain; its full sequence is Phosphoserine phosphatase (206 aa).

The Nucleophile role is filled by Asp7. Mg(2+) is bound by residues Asp7 and Asp9. Asp9 functions as the Proton donor in the catalytic mechanism. Substrate contacts are provided by residues Glu16, Arg52, 95-96 (SG), and Lys140. Asp163 serves as a coordination point for Mg(2+). Residue Asn166 participates in substrate binding.

The protein belongs to the HAD-like hydrolase superfamily. SerB family. It depends on Mg(2+) as a cofactor.

The enzyme catalyses O-phospho-L-serine + H2O = L-serine + phosphate. It carries out the reaction O-phospho-D-serine + H2O = D-serine + phosphate. It functions in the pathway amino-acid biosynthesis; L-serine biosynthesis; L-serine from 3-phospho-D-glycerate: step 3/3. The sequence is that of Phosphoserine phosphatase from Wolinella succinogenes (strain ATCC 29543 / DSM 1740 / CCUG 13145 / JCM 31913 / LMG 7466 / NCTC 11488 / FDC 602W) (Vibrio succinogenes).